The primary structure comprises 436 residues: Ribulose bisphosphate carboxylase large chain (436 aa).

The substrate site is built by Asn-104 and Thr-154. Lys-156 (proton acceptor) is an active-site residue. Lys-158 lines the substrate pocket. Positions 182, 184, and 185 each coordinate Mg(2+). At Lys-182 the chain carries N6-carboxylysine. The Proton acceptor role is filled by His-275. 3 residues coordinate substrate: Arg-276, His-308, and Ser-360.

Belongs to the RuBisCO large chain family. Type I subfamily. As to quaternary structure, heterohexadecamer of 8 large chains and 8 small chains. Mg(2+) is required as a cofactor.

Its subcellular location is the plastid. It is found in the chloroplast. It carries out the reaction 2 (2R)-3-phosphoglycerate + 2 H(+) = D-ribulose 1,5-bisphosphate + CO2 + H2O. It catalyses the reaction D-ribulose 1,5-bisphosphate + O2 = 2-phosphoglycolate + (2R)-3-phosphoglycerate + 2 H(+). Functionally, ruBisCO catalyzes two reactions: the carboxylation of D-ribulose 1,5-bisphosphate, the primary event in carbon dioxide fixation, as well as the oxidative fragmentation of the pentose substrate in the photorespiration process. Both reactions occur simultaneously and in competition at the same active site. The sequence is that of Ribulose bisphosphate carboxylase large chain from Euglena myxocylindracea.